Reading from the N-terminus, the 518-residue chain is Lysine--tRNA ligase (518 aa).

The segment at 1-28 (MTEPTQPNAAQPDAARPNVAPEMDDNKI) is disordered. Residues glutamate 428 and glutamate 435 each coordinate Mg(2+).

Belongs to the class-II aminoacyl-tRNA synthetase family. As to quaternary structure, homodimer. Mg(2+) is required as a cofactor.

The protein localises to the cytoplasm. The catalysed reaction is tRNA(Lys) + L-lysine + ATP = L-lysyl-tRNA(Lys) + AMP + diphosphate. In Paraburkholderia phytofirmans (strain DSM 17436 / LMG 22146 / PsJN) (Burkholderia phytofirmans), this protein is Lysine--tRNA ligase.